The primary structure comprises 476 residues: PTS system N-acetylmuramic acid-specific EIIBC component (476 aa).

In terms of domain architecture, PTS EIIB type-1 spans 1-89 (MATIDNAMIH…KASLGDNMSS (89 aa)). Cys-28 (phosphocysteine intermediate; for EIIB activity) is an active-site residue. The 361-residue stretch at 116–476 (AKFATIFTPL…FFATKDVDLS (361 aa)) folds into the PTS EIIC type-1 domain. Helical transmembrane passes span 118–138 (FATI…LLGL), 160–180 (LIAY…ILIG), 186–206 (AFGG…LGYN), 220–240 (FFGL…AAIV), 265–285 (TLLI…VYLF), 304–324 (VLAG…FVPV), 337–357 (LFPV…ALYF), 371–391 (GAII…VTLP), 396–416 (FITA…IAYL), and 443–463 (VLPA…TGFI).

It localises to the cell inner membrane. It carries out the reaction N-acetyl-beta-D-muramate(out) + N(pros)-phospho-L-histidyl-[protein] = N-acetyl-beta-D-muramate 6-phosphate(in) + L-histidyl-[protein]. Functionally, the phosphoenolpyruvate-dependent sugar phosphotransferase system (sugar PTS), a major carbohydrate active transport system, catalyzes the phosphorylation of incoming sugar substrates concomitantly with their translocation across the cell membrane. This system is involved in N-acetylmuramic acid (MurNAc) transport, yielding cytoplasmic MurNAc-6-P. Is also able to take up anhydro-N-acetylmuramic acid (anhMurNAc), but cannot phosphorylate the carbon 6, probably because of the 1,6-anhydro ring. The chain is PTS system N-acetylmuramic acid-specific EIIBC component (murP) from Pasteurella multocida (strain Pm70).